We begin with the raw amino-acid sequence, 320 residues long: Biotin synthase 2 (320 aa).

The region spanning 34–261 is the Radical SAM core domain; the sequence is NVVQCSKLLS…ASYVRLSAGR (228 aa). [4Fe-4S] cluster is bound by residues Cys49, Cys53, and Cys56. [2Fe-2S] cluster contacts are provided by Cys93, Cys124, Cys184, and Arg256.

Belongs to the radical SAM superfamily. Biotin synthase family. In terms of assembly, homodimer. Requires [4Fe-4S] cluster as cofactor. The cofactor is [2Fe-2S] cluster.

It carries out the reaction (4R,5S)-dethiobiotin + (sulfur carrier)-SH + 2 reduced [2Fe-2S]-[ferredoxin] + 2 S-adenosyl-L-methionine = (sulfur carrier)-H + biotin + 2 5'-deoxyadenosine + 2 L-methionine + 2 oxidized [2Fe-2S]-[ferredoxin]. It functions in the pathway cofactor biosynthesis; biotin biosynthesis; biotin from 7,8-diaminononanoate: step 2/2. Catalyzes the conversion of dethiobiotin (DTB) to biotin by the insertion of a sulfur atom into dethiobiotin via a radical-based mechanism. The protein is Biotin synthase 2 of Paracoccus denitrificans (strain Pd 1222).